Reading from the N-terminus, the 322-residue chain is MFEIHPVKKVSVVIPVYNEQESLPELIRRTTTACESLGKEYEILLIDDGSSDNSAHILVEASQAENSHIVSILLNRNYGQHSAIMAGFSHVTGDLIITLDADLQNPPEEIPRLVAKADEGYDVVGTVRQNRQDSWFRKTASKMINRLIQRTTGKAMGDYGCMLRAYRRHIVDAMLHCHERSTFIPILANIFARRAIEIPVHHAEREYGESKYSFMRLINLMYDLVTCLTTTPLRMLSLLGSIIAIGGFSIAVLLVILRLTFGPQWAAEGVFMLFAVLFTFIGAQFIGMGLLGEYIGRIYTDVRARPRYFVQQVIRPSSKENE.

Residues Met-1–Met-235 lie on the Cytoplasmic side of the membrane. A helical membrane pass occupies residues Leu-236–Ile-256. Topologically, residues Leu-257–Gly-269 are periplasmic. Residues Val-270–Leu-290 form a helical membrane-spanning segment. Over Leu-291 to Glu-322 the chain is Cytoplasmic.

This sequence belongs to the glycosyltransferase 2 family.

Its subcellular location is the cell inner membrane. The catalysed reaction is UDP-4-deoxy-4-formamido-beta-L-arabinose + di-trans,octa-cis-undecaprenyl phosphate = 4-deoxy-4-formamido-alpha-L-arabinopyranosyl di-trans,octa-cis-undecaprenyl phosphate + UDP. Its pathway is glycolipid biosynthesis; 4-amino-4-deoxy-alpha-L-arabinose undecaprenyl phosphate biosynthesis; 4-amino-4-deoxy-alpha-L-arabinose undecaprenyl phosphate from UDP-4-deoxy-4-formamido-beta-L-arabinose and undecaprenyl phosphate: step 1/2. It functions in the pathway bacterial outer membrane biogenesis; lipopolysaccharide biosynthesis. Catalyzes the transfer of 4-deoxy-4-formamido-L-arabinose from UDP to undecaprenyl phosphate. The modified arabinose is attached to lipid A and is required for resistance to polymyxin and cationic antimicrobial peptides. The protein is Undecaprenyl-phosphate 4-deoxy-4-formamido-L-arabinose transferase of Escherichia coli O157:H7 (strain EC4115 / EHEC).